The primary structure comprises 307 residues: Major immediate early protein (307 aa).

Residues 39 to 92 (CAVCLETYCVQSNNIIDFLMPSECTHLFCYKCVLNMYKNAMNVPRAAVSCPMCN) form an RING-type zinc finger.

The protein is Major immediate early protein (PE38) of Orgyia pseudotsugata multicapsid polyhedrosis virus (OpMNPV).